We begin with the raw amino-acid sequence, 93 residues long: MKMFTVISYDIVDDQRRTSVMKVLKGYGVRVQYSVFEAILDAREFHDLSNQLRKIIDPGQDSIRCYRLDQVAAQRTVIYGIGLTTTDPTHYMV.

Asp10 is a binding site for Mg(2+).

This sequence belongs to the CRISPR-associated endoribonuclease Cas2 protein family. Homodimer, forms a heterotetramer with a Cas1 homodimer. Mg(2+) serves as cofactor.

Its function is as follows. CRISPR (clustered regularly interspaced short palindromic repeat), is an adaptive immune system that provides protection against mobile genetic elements (viruses, transposable elements and conjugative plasmids). CRISPR clusters contain sequences complementary to antecedent mobile elements and target invading nucleic acids. CRISPR clusters are transcribed and processed into CRISPR RNA (crRNA). Functions as a ssRNA-specific endoribonuclease. Involved in the integration of spacer DNA into the CRISPR cassette. The chain is CRISPR-associated endoribonuclease Cas2 3 from Chloroflexus aurantiacus (strain ATCC 29366 / DSM 635 / J-10-fl).